The primary structure comprises 871 residues: Leucine--tRNA ligase (871 aa).

The 'HIGH' region motif lies at 42-52 (PYPSGSLHMGH). Residues 634–638 (TMSKS) carry the 'KMSKS' region motif. Residue K637 coordinates ATP.

The protein belongs to the class-I aminoacyl-tRNA synthetase family.

Its subcellular location is the cytoplasm. The enzyme catalyses tRNA(Leu) + L-leucine + ATP = L-leucyl-tRNA(Leu) + AMP + diphosphate. In Nostoc punctiforme (strain ATCC 29133 / PCC 73102), this protein is Leucine--tRNA ligase.